A 255-amino-acid chain; its full sequence is MAREENVYMAKLAEQAERYEEMVSFMEKVSTSLGTSEELTVEERNLLSVAYKNVIGARRASWRIISSIEQKEESRGNEDHVKCIQEYRSKIESELSNICDGILKLLDSCLIPSASAGDSKVFYLKMKGDYHRYLAEFKTGAERKEAAESTLSAYKAAQDIANAELAPTHPIRLGLALNFSVFYYEILNSPDRACNLAKQAFDEAIAELDTLGEESYKDSTLIMQLLRDNLTLWTSDMQDDGADEIKETKTDNEQQ.

The protein belongs to the 14-3-3 family.

This is 14-3-3-like protein B from Nicotiana tabacum (Common tobacco).